We begin with the raw amino-acid sequence, 336 residues long: CASP-like protein UU1 (336 aa).

Over Met1–Asn170 the chain is Cytoplasmic. The helical transmembrane segment at Phe171–Leu191 threads the bilayer. Residues Gly192–Gly222 are Extracellular-facing. The chain crosses the membrane as a helical span at residues Val223–Ile243. At Gln244–Lys261 the chain is on the cytoplasmic side. The chain crosses the membrane as a helical span at residues Leu262–Ala282. Topologically, residues Gly283 to Ala307 are extracellular. A helical transmembrane segment spans residues Ser308–Val328. The Cytoplasmic segment spans residues Arg329–Arg336.

This sequence belongs to the Casparian strip membrane proteins (CASP) family. As to quaternary structure, homodimer and heterodimers.

The protein localises to the cell membrane. The sequence is that of CASP-like protein UU1 from Physcomitrium patens (Spreading-leaved earth moss).